Consider the following 201-residue polypeptide: 3-isopropylmalate dehydratase small subunit (201 aa).

It belongs to the LeuD family. LeuD type 1 subfamily. As to quaternary structure, heterodimer of LeuC and LeuD.

It catalyses the reaction (2R,3S)-3-isopropylmalate = (2S)-2-isopropylmalate. The protein operates within amino-acid biosynthesis; L-leucine biosynthesis; L-leucine from 3-methyl-2-oxobutanoate: step 2/4. Functionally, catalyzes the isomerization between 2-isopropylmalate and 3-isopropylmalate, via the formation of 2-isopropylmaleate. In Brucella abortus (strain S19), this protein is 3-isopropylmalate dehydratase small subunit.